The sequence spans 287 residues: Elongation factor Ts (287 aa).

The involved in Mg(2+) ion dislocation from EF-Tu stretch occupies residues 80–83; sequence TDFL.

The protein belongs to the EF-Ts family.

The protein localises to the cytoplasm. Functionally, associates with the EF-Tu.GDP complex and induces the exchange of GDP to GTP. It remains bound to the aminoacyl-tRNA.EF-Tu.GTP complex up to the GTP hydrolysis stage on the ribosome. The chain is Elongation factor Ts from Pseudomonas fluorescens (strain Pf0-1).